Here is a 215-residue protein sequence, read N- to C-terminus: Variable small protein 2 (215 aa).

Residues 1 to 18 (MRKRISAIIMTLFMVFMS) form the signal peptide. The N-palmitoyl cysteine moiety is linked to residue C19. Residue C19 is the site of S-diacylglycerol cysteine attachment.

Belongs to the variable small protein (Vsp) family.

It is found in the cell outer membrane. Its function is as follows. The Vlp and Vsp proteins are antigenically distinct proteins, only one vlp or vsp gene is transcriptionally active at any one time. Switching between these genes is a mechanism of host immune response evasion. This chain is Variable small protein 2, found in Borrelia hermsii.